The following is a 189-amino-acid chain: GTP cyclohydrolase 1 (189 aa).

Cys-78, His-81, and Cys-150 together coordinate Zn(2+).

Belongs to the GTP cyclohydrolase I family. Toroid-shaped homodecamer, composed of two pentamers of five dimers.

The catalysed reaction is GTP + H2O = 7,8-dihydroneopterin 3'-triphosphate + formate + H(+). Its pathway is cofactor biosynthesis; 7,8-dihydroneopterin triphosphate biosynthesis; 7,8-dihydroneopterin triphosphate from GTP: step 1/1. The protein is GTP cyclohydrolase 1 of Listeria welshimeri serovar 6b (strain ATCC 35897 / DSM 20650 / CCUG 15529 / CIP 8149 / NCTC 11857 / SLCC 5334 / V8).